The following is a 501-amino-acid chain: Suppressor of hairless protein homolog (501 aa).

DNA-binding regions lie at residues 58 to 68 (QKSYGNEKRFF), 166 to 171 (SKPSKK), and 193 to 198 (RLRSQT). Residues 356 to 446 (PVVESLQLNG…YSTSLTFTYT (91 aa)) form the IPT/TIG domain.

It belongs to the Su(H) family. As to quaternary structure, interacts with activated Notch proteins. Forms a ternary complex with nrarp and the intracellular domain (NICD) of notch1. Interacts with rita1, leading to nuclear export, prevent the interaction between rbpj and NICD product and subsequent down-regulation of the Notch signaling pathway.

The protein resides in the nucleus. Its subcellular location is the cytoplasm. Transcriptional regulator that plays a central role in Notch signaling, a signaling pathway involved in cell-cell communication that regulates a broad spectrum of cell-fate determinations. Acts as a transcriptional repressor when it is not associated with Notch proteins. When associated with some NICD product of Notch proteins (Notch intracellular domain), it acts as a transcriptional activator that activates transcription of Notch target genes. Required for the transcriptional activation of ESR1, suggesting that it is required during primary neurogenesis in embryos. Binds to the oxygen responsive element of COX4I2 and activates its transcription under hypoxia conditions (4% oxygen). The protein is Suppressor of hairless protein homolog (rbpj) of Xenopus laevis (African clawed frog).